Reading from the N-terminus, the 66-residue chain is Protein translocase subunit SecE (66 aa).

The helical transmembrane segment at 41–61 (LAVMFIVGFVGFVIYILMEIL) threads the bilayer.

This sequence belongs to the SecE/SEC61-gamma family. Component of the Sec protein translocase complex. Heterotrimer consisting of SecY (alpha), SecG (beta) and SecE (gamma) subunits. The heterotrimers can form oligomers, although 1 heterotrimer is thought to be able to translocate proteins. Interacts with the ribosome. May interact with SecDF, and other proteins may be involved.

The protein localises to the cell membrane. In terms of biological role, essential subunit of the Sec protein translocation channel SecYEG. Clamps together the 2 halves of SecY. May contact the channel plug during translocation. The chain is Protein translocase subunit SecE from Archaeoglobus fulgidus (strain ATCC 49558 / DSM 4304 / JCM 9628 / NBRC 100126 / VC-16).